Consider the following 475-residue polypeptide: Ribulose bisphosphate carboxylase large chain (475 aa).

Positions 1–2 (MS) are excised as a propeptide. Proline 3 bears the N-acetylproline mark. Lysine 14 carries the post-translational modification N6,N6,N6-trimethyllysine. Substrate-binding residues include asparagine 123 and threonine 173. The active-site Proton acceptor is the lysine 175. Lysine 177 provides a ligand contact to substrate. Positions 201, 203, and 204 each coordinate Mg(2+). An N6-carboxylysine modification is found at lysine 201. The active-site Proton acceptor is histidine 294. 3 residues coordinate substrate: arginine 295, histidine 327, and serine 379.

Belongs to the RuBisCO large chain family. Type I subfamily. Heterohexadecamer of 8 large chains and 8 small chains. Requires Mg(2+) as cofactor.

It localises to the plastid. The protein localises to the chloroplast. The catalysed reaction is 2 (2R)-3-phosphoglycerate + 2 H(+) = D-ribulose 1,5-bisphosphate + CO2 + H2O. The enzyme catalyses D-ribulose 1,5-bisphosphate + O2 = 2-phosphoglycolate + (2R)-3-phosphoglycerate + 2 H(+). Functionally, ruBisCO catalyzes two reactions: the carboxylation of D-ribulose 1,5-bisphosphate, the primary event in carbon dioxide fixation, as well as the oxidative fragmentation of the pentose substrate in the photorespiration process. Both reactions occur simultaneously and in competition at the same active site. This is Ribulose bisphosphate carboxylase large chain from Bazzania trilobata (Greater whipwort).